We begin with the raw amino-acid sequence, 523 residues long: ATP-dependent RNA helicase DBP3 (523 aa).

A compositionally biased stretch (basic and acidic residues) spans 1 to 21; that stretch reads MTKEEIADKKRKVVDEEVIEK. The segment at 1-71 is disordered; the sequence is MTKEEIADKK…SEKKPEPTSA (71 aa). Basic residues predominate over residues 22–48; the sequence is KKSKKHKKDKKDKKEKKDKKHKKHKKE. Basic and acidic residues predominate over residues 49-67; the sequence is KKGEKEVEVPEKESEKKPE. The short motif at 114-140 is the Q motif element; sequence LSFDYLSLDSSIQAEISKFPKPTPIQA. The region spanning 143–315 is the Helicase ATP-binding domain; the sequence is WPYLLSGKDV…STFMNNPIKV (173 aa). Residue 156–163 participates in ATP binding; sequence AETGSGKT. The DEAD box motif lies at 262 to 265; sequence DEAD. Residues 344 to 493 enclose the Helicase C-terminal domain; that stretch reads KLLELLKKYH…PVPEDLIKFG (150 aa).

This sequence belongs to the DEAD box helicase family. DDX5/DBP2 subfamily.

It is found in the nucleus. The protein resides in the nucleolus. It carries out the reaction ATP + H2O = ADP + phosphate + H(+). ATP-dependent RNA helicase required for 60S ribosomal subunit synthesis. Involved in efficient pre-rRNA processing, predominantly at site A3, which is necessary for the normal formation of 25S and 5.8S rRNAs. This chain is ATP-dependent RNA helicase DBP3 (DBP3), found in Saccharomyces cerevisiae (strain ATCC 204508 / S288c) (Baker's yeast).